Here is a 336-residue protein sequence, read N- to C-terminus: uncharacterized protein (336 aa).

A disordered region spans residues 162–195 (ARGLPVHSSFKQNNSSQTSSNKGTTTVAAGSGSD). Positions 169 to 187 (SSFKQNNSSQTSSNKGTTT) are enriched in low complexity.

This sequence belongs to the AHA1 family.

This is an uncharacterized protein from Schizosaccharomyces pombe (strain 972 / ATCC 24843) (Fission yeast).